The sequence spans 244 residues: Heat stress transcription factor B-3 (244 aa).

Residues 38–132 (PPPFLVKTYK…LMSNIRRRKS (95 aa)) mediate DNA binding. A hydrophobic repeat HR-A/B region spans residues 173-218 (TSSSFVYTALLDENKCLKNENELLSCELGKTKKKCKQLMELVERYR). The short motif at 202–208 (KTKKKCK) is the Nuclear localization signal element. The interval 216 to 244 (RYRGEDEDATDESDDEEDEGLKLFGVKLE) is disordered. Residues 220-234 (EDEDATDESDDEEDE) are compositionally biased toward acidic residues. The short motif at 236–243 (LKLFGVKL) is the Nuclear export signal element.

This sequence belongs to the HSF family. Class B subfamily. In terms of assembly, homotrimer. Post-translationally, exhibits temperature-dependent phosphorylation.

It localises to the cytoplasm. The protein localises to the nucleus. Functionally, transcriptional regulator that specifically binds DNA sequence 5'-AGAAnnTTCT-3' known as heat shock promoter elements (HSE). This chain is Heat stress transcription factor B-3 (HSFB3), found in Arabidopsis thaliana (Mouse-ear cress).